The following is a 327-amino-acid chain: Arabinose 5-phosphate isomerase KpsF (327 aa).

The region spanning 48-191 (VLNLIMNCKG…AIAMIHQRKF (144 aa)) is the SIS domain. Position 63-68 (63-68 (GMGKSG)) interacts with ATP. Substrate is bound by residues 82 to 83 (GT), His89, His95, 121 to 130 (KLVPSLKNFG), and 155 to 157 (HMA). His89 contributes to the Zn(2+) binding site. 2 CBS domains span residues 217-273 (MQHD…EGSL) and 282-327 (MTRE…RIFD).

Homotetramer.

The catalysed reaction is D-arabinose 5-phosphate = D-ribulose 5-phosphate. Its activity is regulated as follows. Inhibited by 10 uM zinc, cadmium or mercury ions. Involved in the biosynthesis of K-antigen capsules. Catalyzes the reversible aldol-ketol isomerization between D-ribulose 5-phosphate (Ru5P) and D-arabinose 5-phosphate (A5P). This Escherichia coli O6:H1 (strain CFT073 / ATCC 700928 / UPEC) protein is Arabinose 5-phosphate isomerase KpsF.